A 276-amino-acid polypeptide reads, in one-letter code: Undecaprenyl-diphosphatase 1 (276 aa).

5 helical membrane-spanning segments follow: residues 83–103 (FTLN…LFEK), 108–128 (VLFS…IILW), 187–207 (VATE…TLYE), 217–237 (VDSL…AFVC), and 252–272 (VFAW…YSGW).

It belongs to the UppP family.

The protein localises to the cell inner membrane. It catalyses the reaction di-trans,octa-cis-undecaprenyl diphosphate + H2O = di-trans,octa-cis-undecaprenyl phosphate + phosphate + H(+). Catalyzes the dephosphorylation of undecaprenyl diphosphate (UPP). Confers resistance to bacitracin. This is Undecaprenyl-diphosphatase 1 from Burkholderia cenocepacia (strain HI2424).